We begin with the raw amino-acid sequence, 477 residues long: Tripartite motif-containing protein 72 (477 aa).

Zn(2+) is bound by residues Cys-14, Cys-17, Cys-29, His-31, Cys-34, Cys-37, Cys-53, Cys-56, Cys-86, His-89, Cys-97, Asp-100, Cys-105, Cys-108, His-114, and His-117. The segment at 14-57 (CPLCLQLFDAPVTAECGHSFCRACLIRVAGEPADDGTVACPCCQ) adopts an RING-type zinc-finger fold. Residues 81–122 (VPQGHCEEHLDPLSIYCEQDRTLVCGVCASLGSHRGHRLLPA) form a B box-type zinc finger. Positions 135 to 232 (QQKAQLQEAC…EKVLEEVADK (98 aa)) form a coiled coil. Cys-144 carries the S-nitrosocysteine modification. Ser-255 is modified (phosphoserine). Residues 271–475 (DFKFQVWKKM…PLLLVGPDSE (205 aa)) enclose the B30.2/SPRY domain.

It belongs to the TRIM/RBCC family. As to quaternary structure, homodimer. Homooligomer; disulfide-linked. Oligomerizes on the phospholipid membrane. Interacts with DYSF and CAV3. Post-translationally, disulfide bond formation at Cys-242 occurs in case of membrane damage that cause the entry of the oxidized milieu of the extracellular space, resulting in homooligomerization. S-nitrosylation at Cys-144 stabilizes TRIM72 and protects against oxidation-induced protein degradation and cell death.

It localises to the cell membrane. The protein localises to the sarcolemma. Its subcellular location is the cytoplasmic vesicle membrane. It catalyses the reaction S-ubiquitinyl-[E2 ubiquitin-conjugating enzyme]-L-cysteine + [acceptor protein]-L-lysine = [E2 ubiquitin-conjugating enzyme]-L-cysteine + N(6)-ubiquitinyl-[acceptor protein]-L-lysine.. It functions in the pathway protein modification; protein ubiquitination. Its activity is regulated as follows. Specifically binds phosphatidylserine. The binding to phospholipids enhances ubiquitination activity. Muscle-specific E3 ubiquitin-protein ligase that plays a central role in cell membrane repair by nucleating the assembly of the repair machinery at injury sites. Its ubiquitination activity is mediated by E2 ubiquitin-conjugating enzymes UBE2D1, UBE2D2 and UBE2D3. Acts as a sensor of oxidation: upon membrane damage, entry of extracellular oxidative environment results in disulfide bond formation and homooligomerization at the injury site. This oligomerization acts as a nucleation site for recruitment of TRIM72-containing vesicles to the injury site, leading to membrane patch formation. Probably acts upstream of the Ca(2+)-dependent membrane resealing process. Required for transport of DYSF to sites of cell injury during repair patch formation. Regulates membrane budding and exocytosis. May be involved in the regulation of the mobility of KCNB1-containing endocytic vesicles. The protein is Tripartite motif-containing protein 72 of Rattus norvegicus (Rat).